The sequence spans 1023 residues: DNA polymerase (1023 aa).

Residues 726–751 (QTDATRKHRQCTPTSNSSSDEDAPFY) form a disordered region.

It belongs to the DNA polymerase type-B family. In terms of assembly, heterodimer with the terminal protein; this heterodimer binds to bp 9 to 18 of the genome. Forms a complex with viral pTP, DBP and hosts NFIA and POU2F1/OCT1 for initiation of replication.

The protein localises to the host nucleus. The catalysed reaction is DNA(n) + a 2'-deoxyribonucleoside 5'-triphosphate = DNA(n+1) + diphosphate. In terms of biological role, eukaryotic-type DNA polymerase involved in viral genomic replication. DNA synthesis is protein primed, and acts in a strand displacement replication. Assembles in complex with viral pTP, DBP, host NFIA and host POU2F1/OCT1 on viral origin of replication. The polymerase covalently transfers dCMP onto pTP, thereby initiating complementary strand synthesis. The chain is DNA polymerase from Bovine adenovirus B serotype 3 (BAdV-3).